A 218-amino-acid polypeptide reads, in one-letter code: Thiopurine S-methyltransferase (218 aa).

S-adenosyl-L-methionine contacts are provided by Trp-10, Leu-45, Glu-66, and Arg-123.

The protein belongs to the class I-like SAM-binding methyltransferase superfamily. TPMT family.

It localises to the cytoplasm. It carries out the reaction S-adenosyl-L-methionine + a thiopurine = S-adenosyl-L-homocysteine + a thiopurine S-methylether.. This is Thiopurine S-methyltransferase from Shewanella oneidensis (strain ATCC 700550 / JCM 31522 / CIP 106686 / LMG 19005 / NCIMB 14063 / MR-1).